Here is a 109-residue protein sequence, read N- to C-terminus: Flagellar hook-basal body complex protein FliE (109 aa).

It belongs to the FliE family.

It is found in the bacterial flagellum basal body. This chain is Flagellar hook-basal body complex protein FliE, found in Pseudomonas aeruginosa (strain LESB58).